A 484-amino-acid polypeptide reads, in one-letter code: Malonate-semialdehyde dehydrogenase 1 (484 aa).

Positions 154, 178, 181, 182, and 231 each coordinate NAD(+). Cys286 functions as the Nucleophile in the catalytic mechanism. Residue Glu384 coordinates NAD(+).

This sequence belongs to the aldehyde dehydrogenase family. IolA subfamily. In terms of assembly, homotetramer.

The enzyme catalyses 3-oxopropanoate + NAD(+) + CoA + H2O = hydrogencarbonate + acetyl-CoA + NADH + H(+). It catalyses the reaction 2-methyl-3-oxopropanoate + NAD(+) + CoA + H2O = propanoyl-CoA + hydrogencarbonate + NADH + H(+). The protein operates within polyol metabolism; myo-inositol degradation into acetyl-CoA; acetyl-CoA from myo-inositol: step 7/7. Catalyzes the oxidation of malonate semialdehyde (MSA) and methylmalonate semialdehyde (MMSA) into acetyl-CoA and propanoyl-CoA, respectively. Is involved in a myo-inositol catabolic pathway. Bicarbonate, and not CO2, is the end-product of the enzymatic reaction. The protein is Malonate-semialdehyde dehydrogenase 1 of Bacillus licheniformis (strain ATCC 14580 / DSM 13 / JCM 2505 / CCUG 7422 / NBRC 12200 / NCIMB 9375 / NCTC 10341 / NRRL NRS-1264 / Gibson 46).